Consider the following 705-residue polypeptide: Ion-translocating oxidoreductase complex subunit C (705 aa).

4Fe-4S ferredoxin-type domains follow at residues 368-397 (MGET…QQLY) and 407-435 (KATA…LVQY). The [4Fe-4S] cluster site is built by Cys377, Cys380, Cys383, Cys387, Cys416, Cys419, Cys422, and Cys426. The tract at residues 536-684 (RARQAENIPA…EPVDPRKAAV (149 aa)) is disordered.

It belongs to the 4Fe4S bacterial-type ferredoxin family. RnfC subfamily. The complex is composed of six subunits: RnfA, RnfB, RnfC, RnfD, RnfE and RnfG. [4Fe-4S] cluster serves as cofactor.

Its subcellular location is the cell inner membrane. In terms of biological role, part of a membrane-bound complex that couples electron transfer with translocation of ions across the membrane. This is Ion-translocating oxidoreductase complex subunit C from Citrobacter koseri (strain ATCC BAA-895 / CDC 4225-83 / SGSC4696).